Reading from the N-terminus, the 324-residue chain is MTGIKTTGEKKMMFFSGRAHPELAEEVAQQLGVGVVPTKAFDFANGEIYVRYQESARGADCFLIQSHTAPINKWVMEQLIMIDALKRASARSITVIVPFYGYARQDKKHRGREPISARLIADLMKTAGADRILAVDLHTDQIQGFFDGPVDHLFALPLLADYVGAKVDRSKLTVVSPDAGRVRVADRWCDRLGAPLAIVHKRRDKDVANQVTVHEVVGDVKGRICVLVDDMIDTGGTICAAADALFAHGAEDVIVTATHGVLSGPAADRLKNSKVSEFVFTNTLPSASELELDKITVLSIAPTIARAVREVFEDGSVTSLFDEQ.

ATP is bound by residues 45–47 (NGE) and 104–105 (RQ). Mg(2+)-binding residues include H138 and D178. The active site involves K201. D-ribose 5-phosphate contacts are provided by residues R203, D229, and 233-237 (DTGGT).

This sequence belongs to the ribose-phosphate pyrophosphokinase family. Class I subfamily. In terms of assembly, homohexamer. It depends on Mg(2+) as a cofactor.

It localises to the cytoplasm. It carries out the reaction D-ribose 5-phosphate + ATP = 5-phospho-alpha-D-ribose 1-diphosphate + AMP + H(+). It participates in metabolic intermediate biosynthesis; 5-phospho-alpha-D-ribose 1-diphosphate biosynthesis; 5-phospho-alpha-D-ribose 1-diphosphate from D-ribose 5-phosphate (route I): step 1/1. In terms of biological role, involved in the biosynthesis of the central metabolite phospho-alpha-D-ribosyl-1-pyrophosphate (PRPP) via the transfer of pyrophosphoryl group from ATP to 1-hydroxyl of ribose-5-phosphate (Rib-5-P). This is Ribose-phosphate pyrophosphokinase from Streptomyces coelicolor (strain ATCC BAA-471 / A3(2) / M145).